Consider the following 357-residue polypeptide: Membrane-bound lytic murein transglycosylase C (357 aa).

The first 16 residues, 1 to 16 (MKKLLALFVIAPILIS), serve as a signal peptide directing secretion. Cys-17 carries N-palmitoyl cysteine lipidation. A lipid anchor (S-diacylglycerol cysteine) is attached at Cys-17.

The protein belongs to the transglycosylase Slt family.

It is found in the cell outer membrane. The enzyme catalyses Exolytic cleavage of the (1-&gt;4)-beta-glycosidic linkage between N-acetylmuramic acid (MurNAc) and N-acetylglucosamine (GlcNAc) residues in peptidoglycan, from either the reducing or the non-reducing ends of the peptidoglycan chains, with concomitant formation of a 1,6-anhydrobond in the MurNAc residue.. Murein-degrading enzyme. May play a role in recycling of muropeptides during cell elongation and/or cell division. The chain is Membrane-bound lytic murein transglycosylase C from Photorhabdus laumondii subsp. laumondii (strain DSM 15139 / CIP 105565 / TT01) (Photorhabdus luminescens subsp. laumondii).